The following is a 65-amino-acid chain: Large ribosomal subunit protein bL35 (65 aa).

Belongs to the bacterial ribosomal protein bL35 family.

In Prochlorococcus marinus (strain MIT 9313), this protein is Large ribosomal subunit protein bL35.